The following is an 85-amino-acid chain: Putative membrane protein insertion efficiency factor (85 aa).

This sequence belongs to the UPF0161 family.

It is found in the cell inner membrane. Its function is as follows. Could be involved in insertion of integral membrane proteins into the membrane. The sequence is that of Putative membrane protein insertion efficiency factor from Enterobacter sp. (strain 638).